The sequence spans 97 residues: MQPMTHNPGAEAVAAQVIANAARGLAGGTTASAAVTALVPAGADEVSALAAVAFASEGVEALAANAFAQEELTRAGAAFAEIAGIYNAVDAANAATM.

Belongs to the mycobacterial PE family.

In terms of biological role, part of the ESX-1 / type VII specialized secretion system (T7SS), which exports several proteins including EsxA and EsxB. Plays a role in DNA conjugation, in at least a donor strain. This is an uncharacterized protein from Mycolicibacterium smegmatis (strain ATCC 700084 / mc(2)155) (Mycobacterium smegmatis).